Consider the following 185-residue polypeptide: MIENIKKDAQERMGKCVDATKNQMAKVRTGRAHPSLLDSIQVSYYGTMTPLNQVANVGVEDSRTLSVTVFDRSAIQAVEKAIMSSDLGLNPMSAGATLRIPLPALTEERRKDFIKVVRNEAENGRIAIRNVRRDAISEVKKLEKAKACTEDDVRRSEEEVQKFTDAHIKKVDEILAAKEIELMEV.

This sequence belongs to the RRF family.

It localises to the cytoplasm. Responsible for the release of ribosomes from messenger RNA at the termination of protein biosynthesis. May increase the efficiency of translation by recycling ribosomes from one round of translation to another. The sequence is that of Ribosome-recycling factor from Shewanella baltica (strain OS185).